We begin with the raw amino-acid sequence, 545 residues long: Glucose-6-phosphate isomerase (545 aa).

Catalysis depends on Glu351, which acts as the Proton donor. Active-site residues include His382 and Lys510.

This sequence belongs to the GPI family.

It localises to the cytoplasm. The enzyme catalyses alpha-D-glucose 6-phosphate = beta-D-fructose 6-phosphate. The protein operates within carbohydrate biosynthesis; gluconeogenesis. It functions in the pathway carbohydrate degradation; glycolysis; D-glyceraldehyde 3-phosphate and glycerone phosphate from D-glucose: step 2/4. Catalyzes the reversible isomerization of glucose-6-phosphate to fructose-6-phosphate. The sequence is that of Glucose-6-phosphate isomerase from Helicobacter pylori (strain Shi470).